The primary structure comprises 73 residues: Protein SlyX homolog (73 aa).

This sequence belongs to the SlyX family.

In Haemophilus ducreyi (strain 35000HP / ATCC 700724), this protein is Protein SlyX homolog.